Here is a 345-residue protein sequence, read N- to C-terminus: D-fructose 1,6-bisphosphatase class 2/sedoheptulose 1,7-bisphosphatase (345 aa).

4 residues coordinate Mn(2+): Asp-33, Glu-57, Asp-97, and Glu-100. Substrate is bound by residues 100–102 (EGT), Tyr-131, 176–178 (RDR), and 198–200 (DGD). Residue Glu-225 participates in Mn(2+) binding.

The protein belongs to the FBPase class 2 family. Homotetramer. Mn(2+) serves as cofactor.

The enzyme catalyses beta-D-fructose 1,6-bisphosphate + H2O = beta-D-fructose 6-phosphate + phosphate. It catalyses the reaction D-sedoheptulose 1,7-bisphosphate + H2O = D-sedoheptulose 7-phosphate + phosphate. It participates in carbohydrate biosynthesis; Calvin cycle. Functionally, catalyzes the hydrolysis of fructose 1,6-bisphosphate (Fru 1,6-P2) and sedoheptulose 1,7-bisphosphate (Sed 1,7-P2) to fructose 6-phosphate and sedoheptulose 7-phosphate, respectively. The chain is D-fructose 1,6-bisphosphatase class 2/sedoheptulose 1,7-bisphosphatase from Trichormus variabilis (strain ATCC 29413 / PCC 7937) (Anabaena variabilis).